The following is a 457-amino-acid chain: Angiopoietin-related protein 6 (457 aa).

Positions 1–24 (MGTARLRKLQLLLLLGAWRALGGA) are cleaved as a signal peptide. 2 coiled-coil regions span residues 51-77 (DSELATLRMRLGRHEELLRALQRRAAE) and 126-164 (LLAERALDAEAEARRTTARLQQLDAQLREHAQLMSQHSS). Positions 201 to 235 (SNTSRRLDQTPEHQREQSLRQQGPPSSLLPTGHLA) are disordered. A glycan (N-linked (GlcNAc...) asparagine) is linked at N202. Positions 205 to 218 (RRLDQTPEHQREQS) are enriched in basic and acidic residues. Polar residues predominate over residues 219–229 (LRQQGPPSSLL). One can recognise a Fibrinogen C-terminal domain in the interval 238–456 (TRPVGPWRDC…KAVMLTRLVR (219 aa)). Cystine bridges form between C247-C274 and C397-C410.

As to expression, highly expressed in the liver, specifically in hepatocytes, and weakly in the heart. Expressed in hematopoietic cells, platelets and mast cells, and detected at wounded skin.

The protein resides in the secreted. Its function is as follows. May play a role in the wound healing process. May promote epidermal proliferation, remodeling and regeneration. May promote the chemotactic activity of endothelial cells and induce neovascularization. May counteract high-fat diet-induced obesity and related insulin resistance through increased energy expenditure. The chain is Angiopoietin-related protein 6 (Angptl6) from Mus musculus (Mouse).